The following is a 270-amino-acid chain: Carboxy-terminal domain RNA polymerase II polypeptide A small phosphatase 2 (270 aa).

Position 5 is a phosphoserine (Ser-5). An FCP1 homology domain is found at 96 to 254 (QDQGRICVVI…LNLIPVFEEL (159 aa)). The active-site 4-aspartylphosphate intermediate is Asp-106. Asp-106, Asp-108, and Asn-217 together coordinate Mg(2+). The Proton donor role is filled by Asp-108.

Monomer. Interacts with REST. Mg(2+) is required as a cofactor. As to expression, expression is restricted to non-neuronal tissues.

It is found in the nucleus. It catalyses the reaction O-phospho-L-seryl-[protein] + H2O = L-seryl-[protein] + phosphate. The enzyme catalyses O-phospho-L-threonyl-[protein] + H2O = L-threonyl-[protein] + phosphate. In terms of biological role, preferentially catalyzes the dephosphorylation of 'Ser-5' within the tandem 7 residue repeats in the C-terminal domain (CTD) of the largest RNA polymerase II subunit POLR2A. Negatively regulates RNA polymerase II transcription, possibly by controlling the transition from initiation/capping to processive transcript elongation. Recruited by REST to neuronal genes that contain RE-1 elements, leading to neuronal gene silencing in non-neuronal cells. The chain is Carboxy-terminal domain RNA polymerase II polypeptide A small phosphatase 2 (Ctdsp2) from Mus musculus (Mouse).